Reading from the N-terminus, the 116-residue chain is NADH-ubiquinone oxidoreductase chain 3 (116 aa).

3 consecutive transmembrane segments (helical) span residues 10-30, 64-84, and 88-108; these read FLTL…TFAA, FFLV…LFPL, and VFFH…FEWV.

It belongs to the complex I subunit 3 family.

It localises to the mitochondrion membrane. The enzyme catalyses a ubiquinone + NADH + 5 H(+)(in) = a ubiquinol + NAD(+) + 4 H(+)(out). In terms of biological role, core subunit of the mitochondrial membrane respiratory chain NADH dehydrogenase (Complex I) that is believed to belong to the minimal assembly required for catalysis. Complex I functions in the transfer of electrons from NADH to the respiratory chain. The immediate electron acceptor for the enzyme is believed to be ubiquinone. The polypeptide is NADH-ubiquinone oxidoreductase chain 3 (ND3) (Patiria pectinifera (Starfish)).